Consider the following 429-residue polypeptide: WRKY transcription factor 44 (429 aa).

The segment at residues 159–223 (TGDRSSVDGY…YQGEHNHSKP (65 aa)) is a DNA-binding region (WRKY 1). Cys190, Cys195, His218, and His220 together coordinate Zn(2+). Disordered regions lie at residues 214-279 (YQGE…RTEK) and 292-348 (AVPR…SDSL). Polar residues-rich tracts occupy residues 254-275 (QDPN…STQN), 295-313 (RSTN…SSQC), and 334-345 (SEAGVSQGSVES). The segment at residues 343-408 (VESDSLEDGF…YEGKHNHHLL (66 aa)) is a DNA-binding region (WRKY 2). Residues Cys374, Cys379, His403, and His405 each coordinate Zn(2+). Positions 410–422 (SPPSSSTLPFNSP) are enriched in low complexity. The tract at residues 410 to 429 (SPPSSSTLPFNSPQLSKQTI) is disordered.

This sequence belongs to the WRKY group I family. In terms of tissue distribution, leaf promordia, trichomes, atrichoblasts, fertilized eggs, seed coat.

It localises to the nucleus. Its function is as follows. Transcription factor. Interacts specifically with the W box (5'-(T)TGAC[CT]-3'), a frequently occurring elicitor-responsive cis-acting element. Regulates trichome development, production of mucilage and tannin in seed coats, and maybe root hair development. This Arabidopsis thaliana (Mouse-ear cress) protein is WRKY transcription factor 44 (WRKY44).